The primary structure comprises 440 residues: tRNA-2-methylthio-N(6)-dimethylallyladenosine synthase (440 aa).

The MTTase N-terminal domain maps to P2–G118. [4Fe-4S] cluster-binding residues include C11, C47, C81, C155, C159, and C162. Residues R141–E370 form the Radical SAM core domain. The 64-residue stretch at L373–R436 folds into the TRAM domain.

Belongs to the methylthiotransferase family. MiaB subfamily. Monomer. The cofactor is [4Fe-4S] cluster.

It is found in the cytoplasm. It catalyses the reaction N(6)-dimethylallyladenosine(37) in tRNA + (sulfur carrier)-SH + AH2 + 2 S-adenosyl-L-methionine = 2-methylsulfanyl-N(6)-dimethylallyladenosine(37) in tRNA + (sulfur carrier)-H + 5'-deoxyadenosine + L-methionine + A + S-adenosyl-L-homocysteine + 2 H(+). Its function is as follows. Catalyzes the methylthiolation of N6-(dimethylallyl)adenosine (i(6)A), leading to the formation of 2-methylthio-N6-(dimethylallyl)adenosine (ms(2)i(6)A) at position 37 in tRNAs that read codons beginning with uridine. This chain is tRNA-2-methylthio-N(6)-dimethylallyladenosine synthase, found in Dictyoglomus thermophilum (strain ATCC 35947 / DSM 3960 / H-6-12).